A 297-amino-acid chain; its full sequence is MTQLAIIGATASGKSDLAIKIAKKIDAYILSIDSLSIYKEIDIVSAKPSKKELEDIKHFGIDFLHVDDYFSVDIFINLYKEVLQICKEQKKNLIIVGGTSFYLKSLIEGLSAIPKISKEQELHVEIKLKNLQQCYDFLYSLDREYMKNISAKDSYRIEKALLLHVGSSLTPSEWFRQNPPIPVIKNIDIFNIDVSRDILRERILNRTKKMLDLGLIDEVCHLEKKYTRLPHAMNSIGIVETLEYIDGFISKDEMIEKISTHTAQLAKRQQTFNRTQFDTIRSAPLEKLEDIILSTLA.

Residue 8–15 (GATASGKS) participates in ATP binding. A substrate-binding site is contributed by 10–15 (TASGKS). The tract at residues 33-36 (DSLS) is interaction with substrate tRNA.

It belongs to the IPP transferase family. In terms of assembly, monomer. Mg(2+) serves as cofactor.

The enzyme catalyses adenosine(37) in tRNA + dimethylallyl diphosphate = N(6)-dimethylallyladenosine(37) in tRNA + diphosphate. Functionally, catalyzes the transfer of a dimethylallyl group onto the adenine at position 37 in tRNAs that read codons beginning with uridine, leading to the formation of N6-(dimethylallyl)adenosine (i(6)A). This Sulfurimonas denitrificans (strain ATCC 33889 / DSM 1251) (Thiomicrospira denitrificans (strain ATCC 33889 / DSM 1251)) protein is tRNA dimethylallyltransferase.